Here is a 259-residue protein sequence, read N- to C-terminus: DNA-directed RNA polymerase subunit Rpo3 (259 aa).

Belongs to the archaeal Rpo3/eukaryotic RPB3 RNA polymerase subunit family. In terms of assembly, part of the RNA polymerase complex.

It is found in the cytoplasm. The enzyme catalyses RNA(n) + a ribonucleoside 5'-triphosphate = RNA(n+1) + diphosphate. Functionally, DNA-dependent RNA polymerase (RNAP) catalyzes the transcription of DNA into RNA using the four ribonucleoside triphosphates as substrates. The chain is DNA-directed RNA polymerase subunit Rpo3 from Pyrobaculum arsenaticum (strain DSM 13514 / JCM 11321 / PZ6).